Consider the following 398-residue polypeptide: Enolase (398 aa).

Gln154 lines the (2R)-2-phosphoglycerate pocket. Catalysis depends on Glu196, which acts as the Proton donor. Residues Asp232, Glu273, and Asp300 each contribute to the Mg(2+) site. Lys325, Arg354, Ser355, and Lys376 together coordinate (2R)-2-phosphoglycerate. Lys325 serves as the catalytic Proton acceptor.

Belongs to the enolase family. The cofactor is Mg(2+).

It localises to the cytoplasm. Its subcellular location is the secreted. The protein resides in the cell surface. The enzyme catalyses (2R)-2-phosphoglycerate = phosphoenolpyruvate + H2O. It participates in carbohydrate degradation; glycolysis; pyruvate from D-glyceraldehyde 3-phosphate: step 4/5. In terms of biological role, catalyzes the reversible conversion of 2-phosphoglycerate (2-PG) into phosphoenolpyruvate (PEP). It is essential for the degradation of carbohydrates via glycolysis. This is Enolase from Natronomonas pharaonis (strain ATCC 35678 / DSM 2160 / CIP 103997 / JCM 8858 / NBRC 14720 / NCIMB 2260 / Gabara) (Halobacterium pharaonis).